The following is a 261-amino-acid chain: HTH-type transcriptional repressor CsqR (261 aa).

One can recognise an HTH deoR-type domain in the interval 8–63; sequence GNPRHDQLLMLIAERGYMNIDELANLLDVSTQTVRRDIRKLSEQGLITRHHGGAGR. Positions 25–44 form a DNA-binding region, H-T-H motif; sequence MNIDELANLLDVSTQTVRRD.

In terms of assembly, monomer in the absence of DNA. Exhibits a high level of cooperativity once it is bound to its target DNA.

Inactivated in the presence of the effectors sulfoquinovose and sulfoquinovosyl glycerol, leading to the de-repression of the target genes. In terms of biological role, involved in the regulation of the sulfoquinovose operon. Represses the expression of the yihUTS operon and of the yihV and csqR genes. Binds DNA inside the spacer between the bidirectional transcription units comprising the yihUTS operon and the yihV gene, and upstream the csqR gene itself. This Escherichia coli (strain K12) protein is HTH-type transcriptional repressor CsqR.